The primary structure comprises 576 residues: Ferroportin (576 aa).

Residues 1–23 lie on the Cytoplasmic side of the membrane; it reads MPKAGEQARQGGCCGSLANYLTS. A helical transmembrane segment spans residues 24–53; that stretch reads AKFLLYLGHSLSTWGDRMWHFAVSVFLVEL. Residues aspartate 39 and histidine 43 each contribute to the Fe cation site. Topologically, residues 54-57 are extracellular; it reads YGNS. The chain crosses the membrane as a helical span at residues 58–84; it reads LLLTAVYGLVVAGSVLVLGAIIGDWVD. The Cytoplasmic portion of the chain corresponds to 85-87; sequence KNA. A helical membrane pass occupies residues 88 to 118; sequence RLKVAQTSLVVQNVSVILCGIILMMVFLHKN. The Extracellular segment spans residues 119 to 126; the sequence is ELLTMYHG. A helical transmembrane segment spans residues 127–162; that stretch reads WVLTFCYILIITIADVANLASTATAITIQRDWIVVV. The Cytoplasmic segment spans residues 163–164; it reads AG. A helical membrane pass occupies residues 165 to 195; sequence GDRSKLADMNATIRRIDQLTNILAPMAVGQI. Residues 196-202 are Extracellular-facing; that stretch reads MTFGSAV. The helical transmembrane segment at 203–229 threads the bilayer; that stretch reads IGCGFISGWNLVSMCVEYFLLWKVYQK. At 230-306 the chain is on the cytoplasmic side; it reads TPALAVKAAL…DGWVSYYNQS (77 aa). The helical transmembrane segment at 307 to 333 threads the bilayer; sequence VFLAGMGLAFLYMTVLGFDCITTGYAY. Cysteine 326 contributes to the Fe cation binding site. Residues 334–338 are Extracellular-facing; that stretch reads TQGLS. The helical transmembrane segment at 339–366 threads the bilayer; the sequence is GSILSILMGASAITGIMGTVAFTWLRRK. At 367 to 368 the chain is on the cytoplasmic side; that stretch reads CG. A helical transmembrane segment spans residues 369-391; the sequence is LVRTGLISGFAQLSCLILCVISV. Residues 392–458 are Extracellular-facing; that stretch reads FMPGSPLDLS…ETTPKSVPII (67 aa). N-linked (GlcNAc...) asparagine glycosylation is present at asparagine 439. Residues 459–488 traverse the membrane as a helical segment; sequence SVSLLFAGVIAARIGLWSFDLTVTQLLQEN. At 489–493 the chain is on the cytoplasmic side; sequence VIESE. A helical transmembrane segment spans residues 494–518; the sequence is RGIINGVQNSMNYLLDLLHFIMVIL. Histidine 512 provides a ligand contact to Fe cation. The Extracellular portion of the chain corresponds to 519 to 521; it reads APN. A helical membrane pass occupies residues 522-547; that stretch reads PEAFGLLVLISVSFVAMGHIMYFRFA. The Cytoplasmic segment spans residues 548–576; that stretch reads QKTLGSKLFACGADDEEVTNENQANTSVV.

It belongs to the ferroportin (FP) (TC 2.A.100) family. SLC40A subfamily. As to quaternary structure, identified in a complex with STOM. Interacts with HAMP; affinity of the peptide hormone HAMP for SLC40A1 increases by 80-fold in the presence of iron and the interaction promotes SLC40A1 ubiquitination and degradation. Part of a complex composed of SLC40A1/ferroportin, TF/transferrin and HEPH/hephaestin that transfers iron from cells to transferrin. Polyubiquitinated by RNF217; leading to proteasomal degradation. Under conditions of high systemic iron levels, both the hormone peptide hepcidin/HAMP and holo(iron bound)-transferrin/TF induce the ubiquitination, internalization and proteasomal degradation of SLC40A1 to control iron release from cells.

Its subcellular location is the cell membrane. The protein localises to the basolateral cell membrane. The enzyme catalyses Fe(2+)(in) = Fe(2+)(out). With respect to regulation, during elevated serum iron levels, liver-derived hepcidin/HAMP negatively regulates cell surface ferroportin/SLC40A1 by inducing its ubiquitination, internalization, and degradation. Indeed, hepcidin/HAMP affinity towards ferroportin/SLC40A1 increases by 80-fold in the presence of iron. In terms of biological role, transports Fe(2+) from the inside of a cell to the outside of the cell, playing a key role for maintaining systemic iron homeostasis. Transports iron from intestinal, splenic, hepatic cells, macrophages and erythrocytes into the blood to provide iron to other tissues. Controls therefore dietary iron uptake, iron recycling by macrophages and erythrocytes, and release of iron stores in hepatocytes. When iron is in excess in serum, circulating HAMP/hepcidin levels increase resulting in a degradation of SLC40A1, thus limiting the iron efflux to plasma. In Canis lupus familiaris (Dog), this protein is Ferroportin.